The sequence spans 53 residues: Lantibiotic paenibacillin (53 aa).

Positions 1–24 (MKVDQMFDLDLRKSYEASELSPQA) are excised as a propeptide. An N-acetylalanine modification is found at Ala24. Ser25 bears the 2,3-didehydroalanine (Ser) mark. Thr29 and Thr30 each carry 2,3-didehydrobutyrine. Positions 34–38 (SKAVC) form a cross-link, lanthionine (Ser-Cys). Cross-links (beta-methyllanthionine (Thr-Cys)) lie at residues 40–43 (TLTC), 42–45 (TCIC), and 46–49 (TGSC). A cross-link (lanthionine (Ser-Cys)) is located at residues 48–52 (SCSNC). Residue Ser50 is modified to 2,3-didehydroalanine (Ser).

In terms of processing, maturation of lantibiotics involves the enzymatic conversion of Thr, and Ser into dehydrated AA and the formation of thioether bonds with cysteine. This is followed by membrane translocation and cleavage of the modified precursor. Post-translationally, the structure of the 2,3-didehydrobutyrines is not discussed in PubMed:17071789.

The protein resides in the secreted. Functionally, lanthionine-containing peptide antibiotic (lantibiotic) active on Gram-positive bacteria. The bactericidal activity of lantibiotics is based on depolarization of energized bacterial cytoplasmic membranes, initiated by the formation of aqueous transmembrane pores. Lacks antibacterial activity against Gram-negative bacteria. In Paenibacillus polymyxa (Bacillus polymyxa), this protein is Lantibiotic paenibacillin.